The following is a 307-amino-acid chain: Ribosomal RNA small subunit methyltransferase H (307 aa).

Residues Gly38 to His40, Asp58, Phe82, Asp99, and Gln106 contribute to the S-adenosyl-L-methionine site.

The protein belongs to the methyltransferase superfamily. RsmH family.

Its subcellular location is the cytoplasm. The catalysed reaction is cytidine(1402) in 16S rRNA + S-adenosyl-L-methionine = N(4)-methylcytidine(1402) in 16S rRNA + S-adenosyl-L-homocysteine + H(+). In terms of biological role, specifically methylates the N4 position of cytidine in position 1402 (C1402) of 16S rRNA. In Variovorax paradoxus (strain S110), this protein is Ribosomal RNA small subunit methyltransferase H.